The following is a 435-amino-acid chain: Oxaloacetate decarboxylase beta chain (435 aa).

The next 9 helical transmembrane spans lie at 13-35 (IMHITLGQVIMIIVSLILLWLAI), 42-64 (LLLLPIGFGGLLSNIPEAGLAMT), 123-145 (ILALFYKVAIGYGVAPLIIFMGV), 165-187 (AAAQFGIFTTVLGALGLNWLGII), 215-237 (LAPELLGAIAVAAYSYMALVPLI), 267-289 (IVFPIVLLLLVALLLPDAAPLLG), 309-328 (TAQNALINIVTIFLGLSVGA), 340-362 (TLGILLLGIVAFAIGTASGVIMA), and 404-426 (FLLMHAMGPNVAGVISSAIAAGI).

This sequence belongs to the GcdB/MmdB/OadB family. In terms of assembly, heterotrimer of an alpha, a beta and a gamma subunit. Na(+) is required as a cofactor.

Its subcellular location is the cell membrane. It catalyses the reaction oxaloacetate + 2 Na(+)(in) + H(+) = pyruvate + 2 Na(+)(out) + CO2. Its function is as follows. Catalyzes the decarboxylation of oxaloacetate coupled to Na(+) translocation. The polypeptide is Oxaloacetate decarboxylase beta chain (oadB) (Haemophilus ducreyi (strain 35000HP / ATCC 700724)).